Here is a 475-residue protein sequence, read N- to C-terminus: MSPQTETKASVGFKAGVKDYKLTYYTPDYETKDTDILAAFRVTPQPGVPPEEAGAAVAAESSTGTWTTVWTDGLTSLDRYKGRCYHIEPVAGEENQYIAYVAYPLDLFEEGSVTNMFTSIVGNVFGFKALRALRLEDLRIPPAYSKTFQGPPHGIQVERDKLNKYGRPLLGCTIKPKLGLSAKNYGRAVYECLRGGLDFTKDDENVNSQPFMRWRDRFLFCAEAIYKAQAETGEIKGHYLNATAGTCEEMIKRAVFARELGVPIVMHDYLTGGFTANTSLAHYCRDNGLLLHIHRAMHAVIDRQKNHGIHFRVLAKALRMSGGDHIHAGTVVGKLEGEREITLGFVDLLRDDFIEKDRSRGIYFTQDWVSLPGVLPVASGGIHVWHMPALTEIFGDDSVLQFGGGTLGHPWGNAPGAVANRVALEACVQARNEGRDLAREGNEIIREACKWSPELAAACEVWKEIKFEFEAMDTL.

A propeptide spanning residues M1–S2 is cleaved from the precursor. An N-acetylproline modification is found at P3. At K14 the chain carries N6,N6,N6-trimethyllysine. Substrate-binding residues include N123 and T173. Residue K175 is the Proton acceptor of the active site. Position 177 (K177) interacts with substrate. The Mg(2+) site is built by K201, D203, and E204. An N6-carboxylysine modification is found at K201. The active-site Proton acceptor is H294. The substrate site is built by R295, H327, and S379.

Belongs to the RuBisCO large chain family. Type I subfamily. In terms of assembly, heterohexadecamer of 8 large chains and 8 small chains; disulfide-linked. The disulfide link is formed within the large subunit homodimers. The cofactor is Mg(2+). In terms of processing, the disulfide bond which can form in the large chain dimeric partners within the hexadecamer appears to be associated with oxidative stress and protein turnover.

It localises to the plastid. The protein resides in the chloroplast. It catalyses the reaction 2 (2R)-3-phosphoglycerate + 2 H(+) = D-ribulose 1,5-bisphosphate + CO2 + H2O. The enzyme catalyses D-ribulose 1,5-bisphosphate + O2 = 2-phosphoglycolate + (2R)-3-phosphoglycerate + 2 H(+). Functionally, ruBisCO catalyzes two reactions: the carboxylation of D-ribulose 1,5-bisphosphate, the primary event in carbon dioxide fixation, as well as the oxidative fragmentation of the pentose substrate in the photorespiration process. Both reactions occur simultaneously and in competition at the same active site. The polypeptide is Ribulose bisphosphate carboxylase large chain (Platanus occidentalis (Sycamore)).